The following is a 289-amino-acid chain: MTKNSENNLWYIWINGELVPYELATVHALTHSLHYSGSVFEGERAYNGKVFKLKEHTERLVKSAEVLGLKVPYNVEEIIKAHELLIEKNKIQDAYIRPLVWCGSESLNIINPKLSTNVLIAAVPSMPRAFAAGFNLYVSRWRKAAPNMMPVQSKSAAHYNMAITSKKEAKDLGYDDALLLDYEGYIAECTTTNIFFVKDNVLYTPIADRFLDGITRQTIIEIAKNLGLEVKEERLKLEQIEDFISCFATGTAIEVQNINSIDIGNKKVIFNDHKIADVLKEEYGKIVRG.

Residue Lys154 is modified to N6-(pyridoxal phosphate)lysine.

Belongs to the class-IV pyridoxal-phosphate-dependent aminotransferase family. It depends on pyridoxal 5'-phosphate as a cofactor.

It catalyses the reaction L-leucine + 2-oxoglutarate = 4-methyl-2-oxopentanoate + L-glutamate. The enzyme catalyses L-isoleucine + 2-oxoglutarate = (S)-3-methyl-2-oxopentanoate + L-glutamate. It carries out the reaction L-valine + 2-oxoglutarate = 3-methyl-2-oxobutanoate + L-glutamate. It functions in the pathway amino-acid biosynthesis; L-isoleucine biosynthesis; L-isoleucine from 2-oxobutanoate: step 4/4. It participates in amino-acid biosynthesis; L-leucine biosynthesis; L-leucine from 3-methyl-2-oxobutanoate: step 4/4. The protein operates within amino-acid biosynthesis; L-valine biosynthesis; L-valine from pyruvate: step 4/4. Acts on leucine, isoleucine and valine. The sequence is that of Probable branched-chain-amino-acid aminotransferase (ilvE) from Rickettsia bellii (strain RML369-C).